The chain runs to 575 residues: Septation ring formation regulator EzrA (575 aa).

The Extracellular segment spans residues 1–8; the sequence is MSNGQLIY. The helical transmembrane segment at 9–27 threads the bilayer; it reads LMVAIAVILVLAYVVAIFL. Residues 28–575 are Cytoplasmic-facing; that stretch reads RKRNEGRLEA…YEKTRETIRF (548 aa). Coiled-coil stretches lie at residues 105–191, 265–301, 354–416, and 456–526; these read LKAS…FVTL, LYEAFKKNQENIRQLELDNAEYENGQAQEEINALYDI, VRRI…IEKD, and TASN…IQEA.

This sequence belongs to the EzrA family.

It is found in the cell membrane. Negative regulator of FtsZ ring formation; modulates the frequency and position of FtsZ ring formation. Inhibits FtsZ ring formation at polar sites. Interacts either with FtsZ or with one of its binding partners to promote depolymerization. The protein is Septation ring formation regulator EzrA of Streptococcus pneumoniae (strain ATCC BAA-255 / R6).